A 370-amino-acid polypeptide reads, in one-letter code: Glutamate 5-kinase (370 aa).

ATP is bound at residue lysine 17. The substrate site is built by serine 57, aspartate 144, and asparagine 156. ATP is bound by residues 176-177 (SD) and 220-226 (TGGMASK). The PUA domain maps to 282 to 360 (AGALTLDDGA…HELPVEMRRP (79 aa)).

It belongs to the glutamate 5-kinase family.

It localises to the cytoplasm. The enzyme catalyses L-glutamate + ATP = L-glutamyl 5-phosphate + ADP. Its pathway is amino-acid biosynthesis; L-proline biosynthesis; L-glutamate 5-semialdehyde from L-glutamate: step 1/2. In terms of biological role, catalyzes the transfer of a phosphate group to glutamate to form L-glutamate 5-phosphate. This is Glutamate 5-kinase from Mycolicibacterium smegmatis (strain ATCC 700084 / mc(2)155) (Mycobacterium smegmatis).